Here is a 446-residue protein sequence, read N- to C-terminus: NADH-ubiquinone oxidoreductase chain 4 (446 aa).

Helical transmembrane passes span 4-24, 56-76, 93-113, 114-134, 141-161, 182-202, 212-232, 245-265, 272-292, 297-317, 330-350, 373-393, and 426-446; these read IILFLLFLTPVCFINNMYWMV, MLSYGLVLLSLWICSLMLLAS, IVILLLLLVLTFSSMSLFMFY, LFFESSLIPTLFLILGWGYQP, VYLLFYTLLVSLPMLIGIFYV, LLYFCLLCAFLVKMPMFLVHL, PVSGSMILAGIMLKLGGYGLL, YSFVWISISLVGGVLMSLVCL, ALIAYSSVAHMGIVLAGLLTM, LCGSYTLMIAHGLCSSGLFCL, MLINKGLLNFMPAMTLWWFLL, IVSWSWISMIMLSFLSFFSAA, and LLHWLPLNLLILKSESCILWL.

It belongs to the complex I subunit 4 family.

It localises to the mitochondrion membrane. It carries out the reaction a ubiquinone + NADH + 5 H(+)(in) = a ubiquinol + NAD(+) + 4 H(+)(out). Functionally, core subunit of the mitochondrial membrane respiratory chain NADH dehydrogenase (Complex I) that is believed to belong to the minimal assembly required for catalysis. Complex I functions in the transfer of electrons from NADH to the respiratory chain. The immediate electron acceptor for the enzyme is believed to be ubiquinone. The protein is NADH-ubiquinone oxidoreductase chain 4 (mt:ND4) of Drosophila yakuba (Fruit fly).